We begin with the raw amino-acid sequence, 596 residues long: Glomulin (596 aa).

An N-acetylalanine modification is found at alanine 2. The alpha-helical region with structural similarity to HEAT repeats stretch occupies residues 2 to 555 (AVEELQSIIK…EEIPSMPPEM (554 aa)). The interval 299 to 596 (IDQLPMVLSP…STSEENVGIK (298 aa)) is important for interaction with RBX1.

In terms of assembly, interacts with FKBP4 and FKBP1A. Interacts with RBX1 (via RING domain). Identified in complexes that contain RBX1 plus one of the cullins CUL1, CUL2, CUL3, and CUL4A. Identified in a SCF complex composed of CUL1, RBX1, SKP1, FBXW7 and GLMN. Component of a SCF-like complex consisting of CUL7, RBX1, SKP1, FBXW8 and GLMN. Interacts with unphosphorylated MET and is released upon MET phosphorylation. Post-translationally, phosphorylated on tyrosine residues. In terms of tissue distribution, ubiquitous. Detected in embryonic vasculature and embryonic perichondrium, and in adult eye, brain, heart, testis, kidney, smooth muscle and skeletal muscle.

Functionally, regulatory component of cullin-RING-based SCF (SKP1-Cullin-F-box protein) E3 ubiquitin-protein ligase complexes. Inhibits E3 ubiquitin ligase activity by binding to the RING domain of RBX1 and inhibiting its interaction with the E2 ubiquitin-conjugating enzyme CDC34. Inhibits RBX1-mediated neddylation of CUL1. Required for normal stability and normal cellular levels of key components of SCF ubiquitin ligase complexes, including FBXW7, RBX1, CUL1, CUL2, CUL3, CUL4A, and thereby contributes to the regulation of CCNE1 and MYC levels. Essential for normal development of the vasculature. Contributes to the regulation of RPS6KB1 phosphorylation. In Mus musculus (Mouse), this protein is Glomulin (Glmn).